A 222-amino-acid chain; its full sequence is Superoxide dismutase [Mn], mitochondrial (222 aa).

The N-terminal 24 residues, 1–24 (MLSRGVCGTSRQLAPALGYLGSRQ), are a transit peptide targeting the mitochondrion. H50 serves as a coordination point for Mn(2+). Residue Y58 is modified to 3'-nitrotyrosine. N6-acetyllysine; alternate occurs at positions 68 and 75. 2 positions are modified to N6-succinyllysine; alternate: K68 and K75. H98 contacts Mn(2+). K114 bears the N6-acetyllysine mark. Residues K122 and K130 each carry the N6-acetyllysine; alternate modification. 2 positions are modified to N6-succinyllysine; alternate: K122 and K130. Mn(2+) is bound by residues D183 and H187. K202 is subject to N6-acetyllysine.

Belongs to the iron/manganese superoxide dismutase family. In terms of assembly, homotetramer. The cofactor is Mn(2+). In terms of processing, nitrated under oxidative stress. Nitration coupled with oxidation inhibits the catalytic activity. Post-translationally, acetylation at Lys-122 decreases enzymatic activity. Deacetylated by SIRT3 upon exposure to ionizing radiations or after long fasting. Polyubiquitinated; leading to proteasomal degradation. Deubiquitinated by USP36 which increases protein stability.

It is found in the mitochondrion matrix. It carries out the reaction 2 superoxide + 2 H(+) = H2O2 + O2. Functionally, destroys superoxide anion radicals which are normally produced within the cells and which are toxic to biological systems. This Pongo pygmaeus (Bornean orangutan) protein is Superoxide dismutase [Mn], mitochondrial (SOD2).